The following is a 348-amino-acid chain: Protein RecA (348 aa).

64 to 71 (GPESSGKT) contributes to the ATP binding site. Residues 328–348 (DTGGAAPAQEDEAQAQEELEF) are disordered. The segment covering 336–348 (QEDEAQAQEELEF) has biased composition (acidic residues).

This sequence belongs to the RecA family.

It localises to the cytoplasm. Can catalyze the hydrolysis of ATP in the presence of single-stranded DNA, the ATP-dependent uptake of single-stranded DNA by duplex DNA, and the ATP-dependent hybridization of homologous single-stranded DNAs. It interacts with LexA causing its activation and leading to its autocatalytic cleavage. This Bacillus licheniformis (strain ATCC 14580 / DSM 13 / JCM 2505 / CCUG 7422 / NBRC 12200 / NCIMB 9375 / NCTC 10341 / NRRL NRS-1264 / Gibson 46) protein is Protein RecA.